The sequence spans 447 residues: Tubulin beta-2 chain (447 aa).

The GTP site is built by Gln-11, Glu-69, Ser-138, Gly-142, Thr-143, Gly-144, Asn-204, and Asn-226. Mg(2+) is bound at residue Glu-69. Positions 426–447 (QDAGVDEEEEEYEDDAPLEEEV) are disordered. The segment covering 429–447 (GVDEEEEEYEDDAPLEEEV) has biased composition (acidic residues).

This sequence belongs to the tubulin family. As to quaternary structure, dimer of alpha and beta chains. A typical microtubule is a hollow water-filled tube with an outer diameter of 25 nm and an inner diameter of 15 nM. Alpha-beta heterodimers associate head-to-tail to form protofilaments running lengthwise along the microtubule wall with the beta-tubulin subunit facing the microtubule plus end conferring a structural polarity. Microtubules usually have 13 protofilaments but different protofilament numbers can be found in some organisms and specialized cells. Mg(2+) is required as a cofactor.

It is found in the cytoplasm. The protein resides in the cytoskeleton. Its function is as follows. Tubulin is the major constituent of microtubules, a cylinder consisting of laterally associated linear protofilaments composed of alpha- and beta-tubulin heterodimers. Microtubules grow by the addition of GTP-tubulin dimers to the microtubule end, where a stabilizing cap forms. Below the cap, tubulin dimers are in GDP-bound state, owing to GTPase activity of alpha-tubulin. This Colletotrichum graminicola (Maize anthracnose fungus) protein is Tubulin beta-2 chain (TUB2).